We begin with the raw amino-acid sequence, 1147 residues long: Multiple epidermal growth factor-like domains protein 10 (1147 aa).

An N-terminal signal peptide occupies residues 1-25; the sequence is MAISSSSCLGLICSLLCHWVGTASS. The necessary for interaction with AP2M1, self-assembly and formation of the irregular, mosaic-like adhesion pattern stretch occupies residues 1 to 857; the sequence is MAISSSSCLG…ALPADSYQIG (857 aa). Topologically, residues 26 to 857 are extracellular; it reads LNLEDPNVCS…ALPADSYQIG (832 aa). One can recognise an EMI domain in the interval 30–107; it reads DPNVCSHWES…FYESRDMCVP (78 aa). 47 disulfides stabilise this stretch: cysteine 34/cysteine 95, cysteine 60/cysteine 69, cysteine 94/cysteine 105, cysteine 109/cysteine 124, cysteine 126/cysteine 135, cysteine 148/cysteine 160, cysteine 154/cysteine 167, cysteine 169/cysteine 178, cysteine 191/cysteine 203, cysteine 197/cysteine 210, cysteine 212/cysteine 221, cysteine 234/cysteine 246, cysteine 240/cysteine 253, cysteine 255/cysteine 264, cysteine 281/cysteine 289, cysteine 283/cysteine 296, cysteine 298/cysteine 307, cysteine 320/cysteine 332, cysteine 326/cysteine 339, cysteine 341/cysteine 350, cysteine 409/cysteine 421, cysteine 415/cysteine 428, cysteine 430/cysteine 439, cysteine 456/cysteine 464, cysteine 458/cysteine 471, cysteine 473/cysteine 482, cysteine 495/cysteine 507, cysteine 501/cysteine 514, cysteine 516/cysteine 525, cysteine 542/cysteine 550, cysteine 544/cysteine 557, cysteine 559/cysteine 568, cysteine 581/cysteine 593, cysteine 587/cysteine 600, cysteine 602/cysteine 611, cysteine 669/cysteine 681, cysteine 675/cysteine 688, cysteine 690/cysteine 699, cysteine 716/cysteine 724, cysteine 718/cysteine 731, cysteine 733/cysteine 742, cysteine 755/cysteine 767, cysteine 761/cysteine 774, cysteine 776/cysteine 785, cysteine 802/cysteine 810, cysteine 804/cysteine 817, and cysteine 819/cysteine 828. 15 EGF-like domains span residues 101–136, 144–179, 187–222, 230–265, 278–308, 316–351, 405–440, 453–483, 491–526, 539–569, 577–612, 665–700, 713–743, 751–786, and 799–829; these read SRDMCVPHCADKCVHGRCIAPNTCQCEPGWGGTNCS, WGPHCSSRCQCKNRALCNPITGACHCAAGYRGWRCE, YGNDCHQRCQCQNGATCDHITGECRCSPGYTGAFCE, HGPHCEQRCPCQNGGVCHHVTGECSCPSGWMGTVCG, SQECQCHNGGTCDAATGQCHCSPGYTGERCQ, YGVRCAEACRCVNGGKCYHVSGTCLCEAGFSGELCE, YGEACQQICSCQNGADCDSVTGRCACAPGFKGTDCS, SSRCGCKNDAVCSPVDGSCICKAGWHGVDCS, WGFGCNLTCQCLNGGACNTLDGTCTCAPGWRGAKCE, AERCDCSHADGCHPTTGHCRCLPGWSGVHCD, WGPNCSLPCYCKNGASCSPDDGICECAPGFRGTTCQ, FGKNCAGVCTCTNNGTCNPIDRSCQCYPGWIGSDCS, IHTCNCHNGAFCSAYDGECKCTPGWTGLYCT, YGKDCALICQCQNGADCDHISGQCTCRTGFMGRHCE, and RQICDCLNNSTCDHITGTCYCSPGWKGARCD. Asparagine 134 carries N-linked (GlcNAc...) asparagine glycosylation. N-linked (GlcNAc...) asparagine glycosylation is present at asparagine 496. A helical transmembrane segment spans residues 858–878; it reads AIAGIVVLVLVVLFLLALFII. The Cytoplasmic portion of the chain corresponds to 879 to 1147; it reads YRHKQKRKES…STSSSSSSSE (269 aa). The necessary for formation of large intracellular vacuoles stretch occupies residues 945-1147; it reads RDRMTIAKSK…STSSSSSSSE (203 aa). Position 1030 is a phosphotyrosine (tyrosine 1030). The interval 1093 to 1147 is disordered; sequence HVTQDPYDLPKNSHIPCHYDLLPVRDSSSSPKREDGGGSNSTSSNSTSSSSSSSE. A compositionally biased stretch (low complexity) spans 1132–1147; that stretch reads NSTSSNSTSSSSSSSE.

It belongs to the MEGF family. As to quaternary structure, homomer. Interacts with GULP1 and ABCA1. Interacts with AP2M1. Does not interact with MEGF11. Binds with high affinity to complement C1q. Interacts (via the cytoplasmic domain) with NOTCH1 (via NICD domain). Ubiquitinated; mono- and polyubiquitinated forms are detected. In terms of processing, phosphorylated on tyrosine residues. Phosphorylation at Tyr-1030 may be important for muscle cell proliferation. In terms of tissue distribution, expressed in cerebellum (at protein level). Expressed in kidney, stellate cells of the cerebellum and macrophage cell lines.

The protein localises to the cell membrane. Its subcellular location is the cell projection. It is found in the phagocytic cup. In terms of biological role, membrane receptor involved in phagocytosis by macrophages and astrocytes of apoptotic cells. Receptor for C1q, an eat-me signal, that binds phosphatidylserine expressed on the surface of apoptotic cells. Cooperates with ABCA1 within the process of engulfment. Promotes the formation of large intracellular vacuoles and may be responsible for the uptake of amyloid-beta peptides. Necessary for astrocyte-dependent apoptotic neuron clearance in the developing cerebellum. Plays a role in muscle cell proliferation, adhesion and motility. Is also an essential factor in the regulation of myogenesis. Controls the balance between skeletal muscle satellite cells proliferation and differentiation through regulation of the notch signaling pathway. May also function in the mosaic spacing of specific neuron subtypes in the retina through homotypic retinal neuron repulsion. Mosaics provide a mechanism to distribute each cell type evenly across the retina, ensuring that all parts of the visual field have access to a full set of processing elements. The protein is Multiple epidermal growth factor-like domains protein 10 of Mus musculus (Mouse).